The primary structure comprises 448 residues: Velvet complex subunit 2 (448 aa).

Disordered regions lie at residues 1–153 (MNSA…SKIE) and 224–306 (EPGT…NGYG). Over residues 15-34 (PGPAYSSSAPPPIHTYQQHQ) the composition is skewed to low complexity. Pro residues-rich tracts occupy residues 35-44 (HPPPPLPPPS) and 52-61 (PPLPPPPSAP). A compositionally biased stretch (low complexity) spans 96 to 107 (APYQQSQPSQYP). Over residues 116 to 132 (VPPPSQHDEPPPPPSSG) the composition is skewed to pro residues. One can recognise a Velvet domain in the interval 155-431 (GSGWKYSLDV…ANQGIKIPIR (277 aa)). The segment covering 260–292 (QQSYGPAPSYPPSSSYGPPQQYYPRHSGYSAEP) has biased composition (low complexity).

This sequence belongs to the velvet family. VelB subfamily. As to quaternary structure, component of the heterotrimeric velvet complex composed of LAE1, VE1 and VELB; VE1 acting as a bridging protein between LAE1 and VEL2. Interacts with VE1. Forms a heterodimeric complex with VOS1; the formation of the VELB-VOS1 complex is light-dependent.

Its subcellular location is the nucleus. The protein localises to the cytoplasm. Functionally, component of the velvet transcription factor complex that controls sexual/asexual developmental ratio in response to light, promoting sexual development in the darkness while stimulating asexual sporulation under illumination. The velvet complex acts as a global regulator for secondary metabolite gene expression. Component of the VELB-VOS1 heterodimeric complex that plays a dual role in activating genes associated with spore maturation and repressing certain development-associated genes. The VELB-VOS1 complex binds DNA through the DNA-binding domain of VOS1 that recognizes an 11-nucleotide consensus sequence 5'-CTGGCCGCGGC-3' consisting of two motifs in the promoters of key developmental regulatory genes. Controls the expression of the fumonisins gene cluster. Involved in cell wall integrity, cell surface hydrophobicity, hyphal polarity and conidiation pattern. Involved in oxidative stress resistance by positively regulating the transcription of the catalase-encoding gene CAT2. The sequence is that of Velvet complex subunit 2 from Gibberella moniliformis (strain M3125 / FGSC 7600) (Maize ear and stalk rot fungus).